The sequence spans 368 residues: Glutamate 5-kinase (368 aa).

Residue Lys-13 coordinates ATP. Residues Ser-54, Asp-141, and Asn-153 each coordinate substrate. 173-174 (SD) contributes to the ATP binding site. One can recognise a PUA domain in the interval 278–355 (RGVITVDEGA…DEIEAILGYA (78 aa)).

The protein belongs to the glutamate 5-kinase family.

It localises to the cytoplasm. It carries out the reaction L-glutamate + ATP = L-glutamyl 5-phosphate + ADP. The protein operates within amino-acid biosynthesis; L-proline biosynthesis; L-glutamate 5-semialdehyde from L-glutamate: step 1/2. Catalyzes the transfer of a phosphate group to glutamate to form L-glutamate 5-phosphate. The chain is Glutamate 5-kinase from Ruegeria sp. (strain TM1040) (Silicibacter sp.).